The following is a 195-amino-acid chain: MTPSRGAWGVVGVDEAGRGPWAGPVVAAAVVLAEPIAGVTDSKRLSARSRERAAALIRSEAVAWGVGRADVTEIDALNIRRATFLAMARAVAVVAETSPIAEVLVDGREIPDDLPAPARPVVGGDALEPAISAASILAKTLRDAEMVLLDEAYPGYGFGRHKGYGTAEHRRALEELGPCPMHRRSFAPVRRLLGG.

An RNase H type-2 domain is found at 8-195 (WGVVGVDEAG…FAPVRRLLGG (188 aa)). Positions 14, 15, and 106 each coordinate a divalent metal cation.

It belongs to the RNase HII family. It depends on Mn(2+) as a cofactor. Mg(2+) is required as a cofactor.

The protein resides in the cytoplasm. It catalyses the reaction Endonucleolytic cleavage to 5'-phosphomonoester.. Its function is as follows. Endonuclease that specifically degrades the RNA of RNA-DNA hybrids. This is Ribonuclease HII from Halorhodospira halophila (strain DSM 244 / SL1) (Ectothiorhodospira halophila (strain DSM 244 / SL1)).